Consider the following 172-residue polypeptide: Scytalone dehydratase-like protein Arp1 (172 aa).

Tyr49 contacts substrate. Residues His84 and His109 contribute to the active site. Asn130 is a substrate binding site.

Belongs to the scytalone dehydratase family. As to quaternary structure, homotrimer. Each subunit contains an active site, located in the central part of the hydrophobic core of the monomer, which functions independently.

Functionally, scytalone dehydratase-like protein; part of the Pks2 gene cluster that mediates the formation of infectious structures (appressoria), enabling these fungi to kill insects faster. The product of the Pks2 gene cluster is different from the one of Pks1 and has still not been identified. This chain is Scytalone dehydratase-like protein Arp1, found in Metarhizium robertsii (strain ARSEF 23 / ATCC MYA-3075) (Metarhizium anisopliae (strain ARSEF 23)).